Consider the following 178-residue polypeptide: Germinal center-associated signaling and motility protein (178 aa).

The residue at position 99 (Ser-99) is a Phosphoserine. Phosphotyrosine is present on Tyr-148.

As to quaternary structure, interacts with ACTB and MYH2; the interaction with MYH2 is increased by IL6-induced phosphorylation. Interacts (via C-terminus) with ARHGEF11 (via DH domain). Interacts with ARHGEF12. Interacts with SYK; the interaction increases after B-cell receptor stimulation, resulting in enhanced SYK autophosphorylation and activity. Post-translationally, phosphorylation on tyrosine residues can be induced by IL6. Phosphorylation is mediated by LYN. Targeted by the ubiquitin E3 ligase subunit FBXO10 to mediate its ubiquitination and degradation. As to expression, expressed in diffuse large B-cell lymphoma (DLBCL) and several germinal center (GC)-like lymphoma cell lines (at protein level). Highly expressed in normal GC lymphocytes and GC-derived malignancies. Expressed in thymus and spleen.

The protein resides in the cytoplasm. The protein localises to the cell membrane. In terms of biological role, involved in the negative regulation of lymphocyte motility. It mediates the migration-inhibitory effects of IL6. Serves as a positive regulator of the RhoA signaling pathway. Enhancement of RhoA activation results in inhibition of lymphocyte and lymphoma cell motility by activation of its downstream effector ROCK. Is a regulator of B-cell receptor signaling, that acts through SYK kinase activation. The polypeptide is Germinal center-associated signaling and motility protein (GCSAM) (Homo sapiens (Human)).